The chain runs to 495 residues: tRNA-guanine(15) transglycosylase (495 aa).

Asp83 functions as the Nucleophile in the catalytic mechanism. Substrate is bound at residue Asp118. Zn(2+)-binding residues include Cys273 and Cys278.

Belongs to the archaeosine tRNA-ribosyltransferase family. Zn(2+) is required as a cofactor.

It carries out the reaction guanosine(15) in tRNA + 7-cyano-7-deazaguanine = 7-cyano-7-carbaguanosine(15) in tRNA + guanine. It functions in the pathway tRNA modification; archaeosine-tRNA biosynthesis. Exchanges the guanine residue with 7-cyano-7-deazaguanine (preQ0) at position 15 in the dihydrouridine loop (D-loop) of archaeal tRNAs. The sequence is that of tRNA-guanine(15) transglycosylase from Pyrobaculum aerophilum (strain ATCC 51768 / DSM 7523 / JCM 9630 / CIP 104966 / NBRC 100827 / IM2).